A 785-amino-acid chain; its full sequence is Phenylalanine--tRNA ligase beta subunit (785 aa).

In terms of domain architecture, tRNA-binding spans A39–R148. The B5 domain maps to P399 to A474. Mg(2+) contacts are provided by D452, D458, E461, and E462. Positions S692–R784 constitute an FDX-ACB domain.

It belongs to the phenylalanyl-tRNA synthetase beta subunit family. Type 1 subfamily. As to quaternary structure, tetramer of two alpha and two beta subunits. Requires Mg(2+) as cofactor.

The protein localises to the cytoplasm. It carries out the reaction tRNA(Phe) + L-phenylalanine + ATP = L-phenylalanyl-tRNA(Phe) + AMP + diphosphate + H(+). The polypeptide is Phenylalanine--tRNA ligase beta subunit (Chromobacterium violaceum (strain ATCC 12472 / DSM 30191 / JCM 1249 / CCUG 213 / NBRC 12614 / NCIMB 9131 / NCTC 9757 / MK)).